A 440-amino-acid chain; its full sequence is Ribulose bisphosphate carboxylase large chain (440 aa).

N6,N6,N6-trimethyllysine is present on Lys-4. Residues Asn-113 and Thr-163 each coordinate substrate. The active-site Proton acceptor is the Lys-165. Lys-167 lines the substrate pocket. The Mg(2+) site is built by Lys-191, Asp-193, and Glu-194. An N6-carboxylysine modification is found at Lys-191. The active-site Proton acceptor is His-284. Arg-285, His-317, and Ser-369 together coordinate substrate.

This sequence belongs to the RuBisCO large chain family. Type I subfamily. As to quaternary structure, heterohexadecamer of 8 large chains and 8 small chains; disulfide-linked. The disulfide link is formed within the large subunit homodimers. The cofactor is Mg(2+). The disulfide bond which can form in the large chain dimeric partners within the hexadecamer appears to be associated with oxidative stress and protein turnover.

Its subcellular location is the plastid. The protein localises to the chloroplast. It carries out the reaction 2 (2R)-3-phosphoglycerate + 2 H(+) = D-ribulose 1,5-bisphosphate + CO2 + H2O. The enzyme catalyses D-ribulose 1,5-bisphosphate + O2 = 2-phosphoglycolate + (2R)-3-phosphoglycerate + 2 H(+). In terms of biological role, ruBisCO catalyzes two reactions: the carboxylation of D-ribulose 1,5-bisphosphate, the primary event in carbon dioxide fixation, as well as the oxidative fragmentation of the pentose substrate in the photorespiration process. Both reactions occur simultaneously and in competition at the same active site. This chain is Ribulose bisphosphate carboxylase large chain, found in Polystichum munitum (Western sword-fern).